The sequence spans 249 residues: Uroplakin-3b-like protein 1 (249 aa).

The first 26 residues, 1-26 (MGPHGKQSVLRMPLLLLLTCVQSGTG), serve as a signal peptide directing secretion. The Extracellular portion of the chain corresponds to 27–194 (LESINYAPQL…PGSQGKGTVV (168 aa)). N-linked (GlcNAc...) asparagine glycosylation is found at N63, N82, and N133. Residues 195-215 (IIAFLSILLAILLVVFLVLVI) traverse the membrane as a helical segment. The Cytoplasmic portion of the chain corresponds to 216–249 (SACLSTSGSSPEEQVRMRHYHTHHMGSLRAERSS).

It belongs to the uroplakin-3 family.

It is found in the membrane. The protein is Uroplakin-3b-like protein 1 of Mus musculus (Mouse).